The sequence spans 178 residues: Large ribosomal subunit protein bL25 (178 aa).

The protein belongs to the bacterial ribosomal protein bL25 family. CTC subfamily. Part of the 50S ribosomal subunit; part of the 5S rRNA/L5/L18/L25 subcomplex. Contacts the 5S rRNA. Binds to the 5S rRNA independently of L5 and L18.

In terms of biological role, this is one of the proteins that binds to the 5S RNA in the ribosome where it forms part of the central protuberance. In Wolinella succinogenes (strain ATCC 29543 / DSM 1740 / CCUG 13145 / JCM 31913 / LMG 7466 / NCTC 11488 / FDC 602W) (Vibrio succinogenes), this protein is Large ribosomal subunit protein bL25.